Reading from the N-terminus, the 358-residue chain is Alanine racemase (358 aa).

The active-site Proton acceptor; specific for D-alanine is Lys34. Lys34 is subject to N6-(pyridoxal phosphate)lysine. Arg129 contacts substrate. Tyr254 acts as the Proton acceptor; specific for L-alanine in catalysis. A substrate-binding site is contributed by Met302.

Belongs to the alanine racemase family. The cofactor is pyridoxal 5'-phosphate.

It carries out the reaction L-alanine = D-alanine. Its pathway is amino-acid biosynthesis; D-alanine biosynthesis; D-alanine from L-alanine: step 1/1. Its function is as follows. Catalyzes the interconversion of L-alanine and D-alanine. May also act on other amino acids. In Vibrio parahaemolyticus serotype O3:K6 (strain RIMD 2210633), this protein is Alanine racemase (alr).